The primary structure comprises 393 residues: 1-deoxy-D-xylulose 5-phosphate reductoisomerase (393 aa).

T10, G11, S12, I13, R37, and N124 together coordinate NADPH. K125 is a 1-deoxy-D-xylulose 5-phosphate binding site. Residue E126 participates in NADPH binding. D150 lines the Mn(2+) pocket. 4 residues coordinate 1-deoxy-D-xylulose 5-phosphate: S151, E152, S182, and H205. A Mn(2+)-binding site is contributed by E152. G211 contributes to the NADPH binding site. S218, N223, K224, and E227 together coordinate 1-deoxy-D-xylulose 5-phosphate. E227 is a Mn(2+) binding site.

The protein belongs to the DXR family. Requires Mg(2+) as cofactor. Mn(2+) serves as cofactor.

It carries out the reaction 2-C-methyl-D-erythritol 4-phosphate + NADP(+) = 1-deoxy-D-xylulose 5-phosphate + NADPH + H(+). It functions in the pathway isoprenoid biosynthesis; isopentenyl diphosphate biosynthesis via DXP pathway; isopentenyl diphosphate from 1-deoxy-D-xylulose 5-phosphate: step 1/6. Catalyzes the NADPH-dependent rearrangement and reduction of 1-deoxy-D-xylulose-5-phosphate (DXP) to 2-C-methyl-D-erythritol 4-phosphate (MEP). In Nitrosococcus oceani (strain ATCC 19707 / BCRC 17464 / JCM 30415 / NCIMB 11848 / C-107), this protein is 1-deoxy-D-xylulose 5-phosphate reductoisomerase.